A 452-amino-acid polypeptide reads, in one-letter code: Envelope glycoprotein D (452 aa).

The signal sequence occupies residues 1–19 (MPAVLLVLYVNPPPSVCIL). Residues 20 to 405 (TQKLSLGLYN…NSTFVGISVG (386 aa)) lie on the Virion surface side of the membrane. Asn103 and Asn111 each carry an N-linked (GlcNAc...) asparagine; by host glycan. 3 disulfides stabilise this stretch: Cys138-Cys259, Cys176-Cys273, and Cys188-Cys197. A disordered region spans residues 331-365 (PDNHPGFDSVESEITQNKTDPKPGQADPKPNQPFK). N-linked (GlcNAc...) asparagine; by host glycosylation is found at Asn347 and Asn396. The chain crosses the membrane as a helical span at residues 406–422 (LGIAGLVLVGVILYVCL). The Intravirion segment spans residues 423-452 (RRKKELKKSAQNGLTRLRSTFKDVKYTQLP).

It belongs to the herpesviridae glycoprotein D family.

Its subcellular location is the virion membrane. In terms of biological role, envelope glycoprotein that binds to host cell entry receptors, promoting the virus entry into host cells. May trigger fusion with host membrane, by recruiting the fusion machinery composed of gB and gH/gL. This chain is Envelope glycoprotein D (gD), found in Equine herpesvirus 1 (strain Ab4p) (EHV-1).